Reading from the N-terminus, the 210-residue chain is Holliday junction resolvase RecU (210 aa).

Positions 87, 89, 102, and 121 each coordinate Mg(2+).

This sequence belongs to the RecU family. Mg(2+) serves as cofactor.

It is found in the cytoplasm. It catalyses the reaction Endonucleolytic cleavage at a junction such as a reciprocal single-stranded crossover between two homologous DNA duplexes (Holliday junction).. Functionally, endonuclease that resolves Holliday junction intermediates in genetic recombination. Cleaves mobile four-strand junctions by introducing symmetrical nicks in paired strands. Promotes annealing of linear ssDNA with homologous dsDNA. Required for DNA repair, homologous recombination and chromosome segregation. In Lactobacillus delbrueckii subsp. bulgaricus (strain ATCC 11842 / DSM 20081 / BCRC 10696 / JCM 1002 / NBRC 13953 / NCIMB 11778 / NCTC 12712 / WDCM 00102 / Lb 14), this protein is Holliday junction resolvase RecU.